A 329-amino-acid chain; its full sequence is Replication factor C small subunit 1 (329 aa).

44–51 (GPPGTGKT) contributes to the ATP binding site.

This sequence belongs to the activator 1 small subunits family. RfcS subfamily. In terms of assembly, heteromultimer composed of small subunits (RfcS) and large subunits (RfcL).

Its function is as follows. Part of the RFC clamp loader complex which loads the PCNA sliding clamp onto DNA. The protein is Replication factor C small subunit 1 of Pyrobaculum islandicum (strain DSM 4184 / JCM 9189 / GEO3).